A 739-amino-acid polypeptide reads, in one-letter code: Phosphoribosylformylglycinamidine synthase subunit PurL (739 aa).

H54 is an active-site residue. Y57 and K96 together coordinate ATP. E98 is a Mg(2+) binding site. Substrate is bound by residues S99 to H102 and R121. H100 serves as the catalytic Proton acceptor. D122 provides a ligand contact to Mg(2+). Substrate is bound at residue Q245. D275 contributes to the Mg(2+) binding site. E319–Q321 provides a ligand contact to substrate. ATP-binding residues include D504 and G541. A Mg(2+)-binding site is contributed by N542. Position 544 (S544) interacts with substrate.

This sequence belongs to the FGAMS family. In terms of assembly, monomer. Part of the FGAM synthase complex composed of 1 PurL, 1 PurQ and 2 PurS subunits.

The protein resides in the cytoplasm. It carries out the reaction N(2)-formyl-N(1)-(5-phospho-beta-D-ribosyl)glycinamide + L-glutamine + ATP + H2O = 2-formamido-N(1)-(5-O-phospho-beta-D-ribosyl)acetamidine + L-glutamate + ADP + phosphate + H(+). It functions in the pathway purine metabolism; IMP biosynthesis via de novo pathway; 5-amino-1-(5-phospho-D-ribosyl)imidazole from N(2)-formyl-N(1)-(5-phospho-D-ribosyl)glycinamide: step 1/2. Functionally, part of the phosphoribosylformylglycinamidine synthase complex involved in the purines biosynthetic pathway. Catalyzes the ATP-dependent conversion of formylglycinamide ribonucleotide (FGAR) and glutamine to yield formylglycinamidine ribonucleotide (FGAM) and glutamate. The FGAM synthase complex is composed of three subunits. PurQ produces an ammonia molecule by converting glutamine to glutamate. PurL transfers the ammonia molecule to FGAR to form FGAM in an ATP-dependent manner. PurS interacts with PurQ and PurL and is thought to assist in the transfer of the ammonia molecule from PurQ to PurL. The sequence is that of Phosphoribosylformylglycinamidine synthase subunit PurL from Lactococcus lactis subsp. cremoris (strain SK11).